A 168-amino-acid polypeptide reads, in one-letter code: Acetone carboxylase gamma subunit (168 aa).

Heterohexamer of two alpha, two beta and two gamma subunits. The cofactor is Fe cation. It depends on Mg(2+) as a cofactor. Requires Zn(2+) as cofactor.

It catalyses the reaction acetone + hydrogencarbonate + 2 ATP + 3 H2O = acetoacetate + 2 AMP + 4 phosphate + 4 H(+). In terms of biological role, catalyzes the carboxylation of acetone to form acetoacetate. Has a reduced activity on butanone, and no activity on 2-pentatone, 3-pentatone, 2-hexanone, chloroacetone, pyruvate, phosphoenolpyruvate, acetaldehyde, propionaldehyde and propylene oxide. This chain is Acetone carboxylase gamma subunit, found in Xanthobacter autotrophicus (strain ATCC BAA-1158 / Py2).